A 128-amino-acid chain; its full sequence is Phosphoribosyl-AMP cyclohydrolase (128 aa).

Residue Asp-86 participates in Mg(2+) binding. Residue Cys-87 coordinates Zn(2+). Residues Asp-88 and Asp-90 each coordinate Mg(2+). 2 residues coordinate Zn(2+): Cys-103 and Cys-110.

This sequence belongs to the PRA-CH family. In terms of assembly, homodimer. Mg(2+) serves as cofactor. Zn(2+) is required as a cofactor.

It is found in the cytoplasm. The catalysed reaction is 1-(5-phospho-beta-D-ribosyl)-5'-AMP + H2O = 1-(5-phospho-beta-D-ribosyl)-5-[(5-phospho-beta-D-ribosylamino)methylideneamino]imidazole-4-carboxamide. Its pathway is amino-acid biosynthesis; L-histidine biosynthesis; L-histidine from 5-phospho-alpha-D-ribose 1-diphosphate: step 3/9. In terms of biological role, catalyzes the hydrolysis of the adenine ring of phosphoribosyl-AMP. The chain is Phosphoribosyl-AMP cyclohydrolase from Roseobacter denitrificans (strain ATCC 33942 / OCh 114) (Erythrobacter sp. (strain OCh 114)).